A 391-amino-acid polypeptide reads, in one-letter code: Paired box protein Pax-5 (391 aa).

Positions 16 to 142 (GHGGVNQLGG…SSINRIIRTK (127 aa)) form a DNA-binding region, paired. Positions 19 to 75 (GVNQLGGVFVNGRPLPDVVRQRIVELAHQGVRPCDISRQLRVSHGCVSKILGRYYET) are PAI subdomain. The tract at residues 94 to 142 (KVVEKIAEYKRQNPTMFAWEIRDRLLAERVCDNDTVPSVSSINRIIRTK) is RED subdomain. Residues 182-218 (SGILGITSPSADTNKRKRDEGIQESPVPNGHSLPGRD) form a disordered region.

Interacts with ETS1; this interaction alters PAX5 DNA-binding properties. Binds DNA as a monomer. Interacts with TBP; this interaction allows PAX5 to interact with the basal transcription machinery. Interacts with RB1. Interacts with TLE4. Interacts with DAXX. O-glycosylated. In terms of processing, phosphorylated by SYK. This phosphorylation plays an important role in the abolition of BLIMP1 repression by PAX5 in order to trigger plasma cell differentiation. As to expression, expressed in all B-lymphoid organs, in the embryonic midbrain and in adult testis.

The protein localises to the nucleus. Transcription factor that plays an essential role in commitment of lymphoid progenitors to the B-lymphocyte lineage. Fulfills a dual role by repressing B-lineage inappropriate genes and simultaneously activating B-lineage-specific genes. In turn, regulates cell adhesion and migration, induces V(H)-to-D(H)J(H) recombination, facilitates pre-B-cell receptor signaling and promotes development to the mature B-cell stage. Repression of the cohesin-release factor WAPL causes global changes of the chromosomal architecture in pro-B cells to facilitate the generation of a diverse antibody repertoire. This is Paired box protein Pax-5 (Pax5) from Mus musculus (Mouse).